A 105-amino-acid polypeptide reads, in one-letter code: Protein AlbB (105 aa).

Its function is as follows. Involved in the biosynthesis of albonoursin (cyclo[(alpha,beta-dehydro-Phe)-(alpha,beta-dehydro-Leu)]), an antibacterial peptide. AlbB is essential for cyclic dipeptide oxidase AlbA (CDO) activity. This Streptomyces noursei (Streptomyces albulus) protein is Protein AlbB (albB).